Reading from the N-terminus, the 113-residue chain is Probable leucocin-A immunity protein (113 aa).

It belongs to the immunity protein EntA family.

Functionally, imparts immunity to leucocin-A to naturally sensitive host strains. The sequence is that of Probable leucocin-A immunity protein from Leuconostoc gelidum.